The sequence spans 704 residues: Elongation factor G (704 aa).

Residues 8-290 (ARYRNIGISA…AVVDYLPSPV (283 aa)) form the tr-type G domain. Residues 17–24 (AHIDAGKT), 88–92 (DTPGH), and 142–145 (NKMD) each bind GTP.

The protein belongs to the TRAFAC class translation factor GTPase superfamily. Classic translation factor GTPase family. EF-G/EF-2 subfamily.

It is found in the cytoplasm. In terms of biological role, catalyzes the GTP-dependent ribosomal translocation step during translation elongation. During this step, the ribosome changes from the pre-translocational (PRE) to the post-translocational (POST) state as the newly formed A-site-bound peptidyl-tRNA and P-site-bound deacylated tRNA move to the P and E sites, respectively. Catalyzes the coordinated movement of the two tRNA molecules, the mRNA and conformational changes in the ribosome. In Pectobacterium carotovorum subsp. carotovorum (strain PC1), this protein is Elongation factor G.